Here is a 397-residue protein sequence, read N- to C-terminus: Serine protease MT3772 (397 aa).

The next 4 membrane-spanning stretches (helical) occupy residues 9 to 29 (IAVLAVAFIAAISGWRAGALG), 32 to 52 (LSFGGVLLGATAGVLLAPHIV), 62 to 82 (LFAALFLILALVVVGEVAGVV), and 102 to 122 (VIGVGVQLVVVLTAAWLLAMP). C214 and C395 form a disulfide bridge. The active-site Proton acceptor is the H235. Residue D264 is part of the active site. The Charge relay system role is filled by S343.

This sequence belongs to the peptidase S1C family. As to quaternary structure, monomer.

It localises to the membrane. Functionally, required for M.tuberculosis resistance to oxidative stress in addition to its role in resistance to acid, which is essential for virulence. The chain is Serine protease MT3772 from Mycobacterium tuberculosis (strain CDC 1551 / Oshkosh).